Reading from the N-terminus, the 87-residue chain is Small ribosomal subunit protein bS20 (87 aa).

Over residues 1–15 (MANHKSAMKRIKQTA) the composition is skewed to basic residues. The tract at residues 1–27 (MANHKSAMKRIKQTAKRTERNKHERST) is disordered. The segment covering 16 to 27 (KRTERNKHERST) has biased composition (basic and acidic residues).

It belongs to the bacterial ribosomal protein bS20 family.

Functionally, binds directly to 16S ribosomal RNA. In Citrifermentans bemidjiense (strain ATCC BAA-1014 / DSM 16622 / JCM 12645 / Bem) (Geobacter bemidjiensis), this protein is Small ribosomal subunit protein bS20.